A 297-amino-acid polypeptide reads, in one-letter code: MMVNDIEYIRQAEATRVQVLSEALPYIQQFAGRTVVVKYGGAAMKDSHLKDQVIRDIVFLSCVGLRPILVHGGGPEINSWLDKLGIEAQFKNGLRVTDAPTMDVVEMVLVGRVNKEIVSLINQAGGLAVGLCGKDGNLITARPQGQEGIGFVGEVSNVNIKILETLASNGYIPVVSSVAADDSGQAYNINADTVAGEIAAALGAEKLILLTDTRGILKDYKDPGTLIPKVDIREARELINGGVVSGGMIPKVTCCVRSLAQGVRAAHIIDGRIPHALLLEIFTDVGIGTMILGSQYS.

Residues 73–74, Arg95, and Asn188 each bind substrate; that span reads GG.

This sequence belongs to the acetylglutamate kinase family. ArgB subfamily.

It is found in the cytoplasm. It catalyses the reaction N-acetyl-L-glutamate + ATP = N-acetyl-L-glutamyl 5-phosphate + ADP. It functions in the pathway amino-acid biosynthesis; L-arginine biosynthesis; N(2)-acetyl-L-ornithine from L-glutamate: step 2/4. Functionally, catalyzes the ATP-dependent phosphorylation of N-acetyl-L-glutamate. This is Acetylglutamate kinase from Trichormus variabilis (strain ATCC 29413 / PCC 7937) (Anabaena variabilis).